Consider the following 137-residue polypeptide: Large ribosomal subunit protein uL16 (137 aa).

The protein belongs to the universal ribosomal protein uL16 family. As to quaternary structure, part of the 50S ribosomal subunit.

Its function is as follows. Binds 23S rRNA and is also seen to make contacts with the A and possibly P site tRNAs. In Paracoccus denitrificans (strain Pd 1222), this protein is Large ribosomal subunit protein uL16.